The chain runs to 546 residues: Chromosomal replication initiator protein DnaA (546 aa).

Residues 1–85 (MSDPQAALRA…TRALSQHMGR (85 aa)) are domain I, interacts with DnaA modulators. Residues 85–204 (RPCSLAVTIA…EPAHNPNREK (120 aa)) are domain II. Residues 96-111 (PPQPAPQEEPPAPAPQ) are compositionally biased toward pro residues. The disordered stretch occupies residues 96-209 (PPQPAPQEEP…PNREKSLNPK (114 aa)). Positions 126 to 145 (QTQAFQQPTQSTQPAPASQP) are enriched in low complexity. Residues 191–209 (IPREEPAHNPNREKSLNPK) are compositionally biased toward basic and acidic residues. Positions 205-421 (SLNPKHTFEN…GALIRVSAYS (217 aa)) are domain III, AAA+ region. ATP-binding residues include Gly-249, Gly-251, Lys-252, and Thr-253. The tract at residues 422–546 (SLVNEPISLE…TQRVKNHNQR (125 aa)) is domain IV, binds dsDNA.

The protein belongs to the DnaA family. In terms of assembly, oligomerizes as a right-handed, spiral filament on DNA at oriC.

Its subcellular location is the cytoplasm. Its function is as follows. Plays an essential role in the initiation and regulation of chromosomal replication. ATP-DnaA binds to the origin of replication (oriC) to initiate formation of the DNA replication initiation complex once per cell cycle. Binds the DnaA box (a 9 base pair repeat at the origin) and separates the double-stranded (ds)DNA. Forms a right-handed helical filament on oriC DNA; dsDNA binds to the exterior of the filament while single-stranded (ss)DNA is stabiized in the filament's interior. The ATP-DnaA-oriC complex binds and stabilizes one strand of the AT-rich DNA unwinding element (DUE), permitting loading of DNA polymerase. After initiation quickly degrades to an ADP-DnaA complex that is not apt for DNA replication. Binds acidic phospholipids. In Corynebacterium aurimucosum (strain ATCC 700975 / DSM 44827 / CIP 107346 / CN-1) (Corynebacterium nigricans), this protein is Chromosomal replication initiator protein DnaA.